A 1572-amino-acid chain; its full sequence is Multiple epidermal growth factor-like domains protein 6 (1572 aa).

The N-terminal stretch at 1–26 (MPVGVEARASWRVVALTLLLLPAVPA) is a signal peptide. The EMI domain occupies 40 to 121 (MPHVCAEQKL…QKPGQEGCLS (82 aa)). 36 cysteine pairs are disulfide-bonded: Cys44–Cys107, Cys73–Cys79, Cys106–Cys119, Cys126–Cys137, Cys133–Cys146, Cys148–Cys161, Cys167–Cys178, Cys174–Cys187, Cys189–Cys202, Cys291–Cys302, Cys298–Cys311, Cys313–Cys326, Cys418–Cys429, Cys425–Cys438, Cys440–Cys453, Cys522–Cys535, Cys529–Cys542, Cys544–Cys553, Cys566–Cys578, Cys572–Cys585, Cys587–Cys596, Cys609–Cys621, Cys615–Cys628, Cys630–Cys639, Cys788–Cys797, Cys791–Cys804, Cys806–Cys815, Cys832–Cys840, Cys834–Cys847, Cys849–Cys858, Cys871–Cys884, Cys875–Cys891, Cys893–Cys902, Cys915–Cys927, Cys921–Cys934, and Cys936–Cys945. The region spanning 122 to 162 (DVDECANANGGCEGPCCNTVGGFYCRCPPGYQLQGDGKTCQ) is the EGF-like 1; calcium-binding domain. One can recognise an EGF-like 2; calcium-binding domain in the interval 163–203 (DVDECRSHNGGCQHRCVNTPGSYLCECKPGFRLHTDGRTCL). Residues 287–327 (DVDECALGLAQCAHGCLNTQGSFKCVCHAGYELGADGRQCY) form the EGF-like 3; calcium-binding domain. Residues 414–454 (DVDECASGHSGCEHHCSNLAGSFQCFCEAGYRLDEDRRGCT) enclose the EGF-like 4; calcium-binding domain. 17 EGF-like domains span residues 518–554 (FGHD…IICN), 562–597 (FGKN…AHCE), 605–640 (YGKH…RFCH), 785–816 (QEIC…SRCQ), 829–859 (QMRC…LSCQ), 867–903 (WGPD…PQCE), 911–946 (FGPG…SFCE), 997–1032 (FGLN…PTCL), 1040–1075 (YGKN…LACE), 1083–1118 (HGAG…DKCQ), 1131–1161 (EEHC…SHCE), 1169–1204 (FGEA…PGCE), 1256–1291 (YGPG…ADCS), 1299–1334 (FGPS…GHCE), 1342–1377 (FGKG…PHCE), 1390–1420 (LLEC…QACE), and 1428–1463 (HGSG…QFCE). Asn1000 is a glycosylation site (N-linked (GlcNAc...) asparagine). Disulfide bonds link Cys1001–Cys1013, Cys1007–Cys1020, Cys1022–Cys1031, Cys1044–Cys1056, Cys1050–Cys1063, Cys1065–Cys1074, Cys1087–Cys1099, Cys1093–Cys1106, Cys1108–Cys1117, Cys1134–Cys1142, Cys1136–Cys1149, Cys1151–Cys1160, Cys1173–Cys1185, Cys1177–Cys1192, Cys1194–Cys1203, Cys1260–Cys1272, Cys1266–Cys1279, Cys1281–Cys1290, Cys1303–Cys1315, Cys1309–Cys1322, Cys1324–Cys1333, Cys1346–Cys1358, Cys1352–Cys1365, Cys1367–Cys1376, Cys1393–Cys1401, Cys1395–Cys1408, Cys1410–Cys1419, Cys1432–Cys1444, Cys1438–Cys1451, and Cys1453–Cys1462.

It localises to the secreted. The polypeptide is Multiple epidermal growth factor-like domains protein 6 (Megf6) (Mus musculus (Mouse)).